A 108-amino-acid polypeptide reads, in one-letter code: Complement inhibitor CirpT4 (108 aa).

Residues 1-19 (MRAFVALFCTLVAFATVIC) form the signal peptide. 4 cysteine pairs are disulfide-bonded: C40-C64, C59-C98, C76-C99, and C85-C104.

This sequence belongs to the CirpT family. Expressed in salivary glands.

It is found in the secreted. In terms of biological role, complement inhibitor. Prevents complement-mediated activation of C5 by sterically preventing direct binding of C5 to its convertase (binding with domains MG4 and MG5). Binds C5 at a different binding site than the other tick complement inhibitors OmCI and RaCI3, and the drug eculizumab. Inhibits the complement in human, rat and guinea pig, and also shows a reduced inhibition in rabbit and pig. The chain is Complement inhibitor CirpT4 from Amblyomma americanum (Lone star tick).